The primary structure comprises 209 residues: Phosphoheptose isomerase (209 aa).

The SIS domain maps to 50 to 209; sequence IAETFRNGGK…ELVESMMGYA (160 aa). 65–67 is a substrate binding site; that stretch reads NGG. Histidine 74 and glutamate 78 together coordinate Zn(2+). Residues glutamate 78, 109-110, 135-137, serine 140, and glutamine 188 contribute to the substrate site; these read ND and STS. Zn(2+) is bound by residues glutamine 188 and histidine 196.

The protein belongs to the SIS family. GmhA subfamily. Zn(2+) serves as cofactor.

The protein localises to the cytoplasm. The enzyme catalyses 2 D-sedoheptulose 7-phosphate = D-glycero-alpha-D-manno-heptose 7-phosphate + D-glycero-beta-D-manno-heptose 7-phosphate. It participates in carbohydrate biosynthesis; D-glycero-D-manno-heptose 7-phosphate biosynthesis; D-glycero-alpha-D-manno-heptose 7-phosphate and D-glycero-beta-D-manno-heptose 7-phosphate from sedoheptulose 7-phosphate: step 1/1. In terms of biological role, catalyzes the isomerization of sedoheptulose 7-phosphate in D-glycero-D-manno-heptose 7-phosphate. The polypeptide is Phosphoheptose isomerase (Chlorobaculum parvum (strain DSM 263 / NCIMB 8327) (Chlorobium vibrioforme subsp. thiosulfatophilum)).